The sequence spans 1969 residues: Echinoderm microtubule-associated protein-like 5 (1969 aa).

10 WD repeats span residues 59–100 (GHSD…TISV), 104–145 (VHTH…MLSM), 148–187 (GHTD…LTPK), 195–233 (GDLQ…RTIQ), 235–273 (AHAA…TVID), 280–321 (GYKG…LIMQ), 323–362 (HCEG…LIAR), 406–445 (DRKE…KKVG), 449–488 (GSLS…EVTS), and 561–601 (GHSA…KLKD). Residues 609-633 (ESLADSHSDESDSDLSDVPELDSEI) are disordered. Residues 619 to 633 (SDSDLSDVPELDSEI) show a composition bias toward acidic residues. WD repeat units lie at residues 725 to 766 (GHDD…PLSI), 770 to 811 (HHQY…KLSI), 814 to 853 (GSKD…LIGR), 861 to 900 (GKND…KTVK), 901 to 940 (AHDG…KTYA), 996 to 1035 (HMEG…CMLA), 1038 to 1077 (KLKK…DLVS), 1080 to 1120 (HRKD…RVGI), and 1236 to 1276 (AHST…YREK). Disordered stretches follow at residues 1274 to 1297 (REKR…YDSD) and 1326 to 1355 (QQKE…NVGK). Over residues 1281-1294 (SEESDIDSEEDGGY) the composition is skewed to acidic residues. The span at 1326–1337 (QQKEPSIDERPP) shows a compositional bias: basic and acidic residues. 10 WD repeats span residues 1412–1463 (EHND…TLSI), 1467–1508 (YHSK…KIAS), 1511–1550 (GHNQ…LLSK), 1560–1598 (ARMQ…RIVA), 1600–1646 (AHNG…RAFR), 1691–1731 (GHVD…MLNK), 1733–1774 (NLGH…GKKR), 1775–1814 (DRRC…TLNR), 1887–1926 (AEKA…KFAK), and 1932–1969 (GHSP…HTPH).

This sequence belongs to the WD repeat EMAP family.

It localises to the cytoplasm. The protein localises to the cytoskeleton. Its function is as follows. May modify the assembly dynamics of microtubules, such that microtubules are slightly longer, but more dynamic. The sequence is that of Echinoderm microtubule-associated protein-like 5 (EML5) from Homo sapiens (Human).